We begin with the raw amino-acid sequence, 87 residues long: Small ribosomal subunit protein bS20 (87 aa).

Residues 1–22 (MAHHKSALKRIKQNKRKQFRNK) form a disordered region.

The protein belongs to the bacterial ribosomal protein bS20 family.

Functionally, binds directly to 16S ribosomal RNA. The polypeptide is Small ribosomal subunit protein bS20 (Geobacter metallireducens (strain ATCC 53774 / DSM 7210 / GS-15)).